A 199-amino-acid chain; its full sequence is Transcription factor 15 (199 aa).

The disordered stretch occupies residues 25-67 (EENRSESDASDQSFGCCEGPEAARRGPGPGGGRRAGGGGGAGP). The span at 51-66 (PGPGGGRRAGGGGGAG) shows a compositional bias: gly residues. Positions 72–124 (RQRQAANARERDRTQSVNTAFTALRTLIPTEPVDRKLSKIETVRLASSYIAHL) constitute a bHLH domain.

As to quaternary structure, heterodimer; efficient DNA binding requires dimerization with another bHLH protein, such as TCF3/E12. Interacts with MEOX2.

It is found in the nucleus. Early transcription factor that plays a key role in somitogenesis, paraxial mesoderm development and regulation of stem cell pluripotency. Essential for the mesenchymal to epithelial transition associated with somite formation. Required for somite morphogenesis, thereby regulating patterning of the axial skeleton and skeletal muscles. Required for proper localization of somite epithelium markers during the mesenchymal to epithelial transition. Also plays a key role in regulation of stem cell pluripotency. Promotes pluripotency exit of embryonic stem cells (ESCs) by priming ESCs for differentiation. Acts as a key regulator of self-renewal of hematopoietic stem cells (HSCs) by mediating HSCs quiescence and long-term self-renewal. Together with MEOX2, regulates transcription in heart endothelial cells to regulate fatty acid transport across heart endothelial cells. Acts by forming a heterodimer with another helix-loop-helix (bHLH) protein, such as TCF3/E12, that binds DNA on E-box motifs (5'-CANNTG-3') and activates transcription of target genes. This chain is Transcription factor 15, found in Homo sapiens (Human).